A 449-amino-acid polypeptide reads, in one-letter code: POU domain, class 5, transcription factor 1.1 (449 aa).

Disordered stretches follow at residues 79–125 (ENNQ…SPPN) and 170–233 (YPTP…PSES). The span at 97 to 110 (SRIKVKEEVVHETD) shows a compositional bias: basic and acidic residues. Residues 170–180 (YPTPANQSPNT) show a composition bias toward polar residues. Residues 187-199 (SSMESSRCSSTNS) show a composition bias toward low complexity. Acidic residues predominate over residues 224 to 233 (DNEEEVPSES). Residues 227-301 (EEVPSESEME…FLERWVVEAE (75 aa)) form the POU-specific domain. The homeobox DNA-binding region spans 321–380 (KRKRRTNIENIVKGTLESYFMKCPKPGAQEMVQIAKELNMDKDVVRVWFCNRRQKGKRQG).

It belongs to the POU transcription factor family. Class-5 subfamily. Interacts with components of the transcription complex that assembles on the vent2-B gene, including vent2 (via C-terminus), smad1 and smad4. Forms a repression complex on the promoters of the gsc and mix2 genes via interactions with the nodal/activin signaling pathway transducers foxh1/fast1, gtf2ird1/wbscr11 and smad2. Forms a repression complex on the promoters of the nodal/nr1 and siamois genes with the maternal factors tcf7l1/tcf3 and vegt. In terms of tissue distribution, highly enriched within the animal half of developing embryos within ectodermal and mesodermal regions. Expressed in the neuroectoderm at the early neurula stage, with expression initially extending to the future hindbrain/midbrain boundary, but later shifting toward the posterior pole where it persists within the tip of the tail in hatching embryos. Expressed at very low levels in the adult kidney.

It localises to the nucleus. Transcription factor that binds to the octamer motif (5'-ATTTGCAT-3'). Activates transcription when directly bound to the octamer DNA sequence, but can form repression complexes with other proteins at the promoter site to inhibit transcription. Binds to the promoter of the vent2-B gene to activate transcription when in the presence of other BMP signaling factors also bound to the promoter. Inhibits the competence of ectodermal cells to respond to BMP during embryogenesis thereby inhibiting epidermal differentiation and promoting neural induction. Antagonizes the activity of nodal/activin signaling by forming a transcriptional repression complex on the gsc and mix2 gene promoters to inhibit their transcription, and thus maintain the undifferentiated state of embryonic cells to prevent them from differentiating prematurely. Acts maternally to inhibit vegt and beta-catenin-activated gene transcription by forming a transcriptional repression complex on the nodal/nr1 and siamois promoters to inhibit their transcription. The protein is POU domain, class 5, transcription factor 1.1 (pou5f1.1) of Xenopus laevis (African clawed frog).